A 205-amino-acid chain; its full sequence is Transcription termination/antitermination protein NusG (205 aa).

Residues 154–178 (GDHIMVLSGPFKDFEGDVIEVSPER) enclose the KOW domain.

It belongs to the NusG family.

Participates in transcription elongation, termination and antitermination. In Synechocystis sp. (strain ATCC 27184 / PCC 6803 / Kazusa), this protein is Transcription termination/antitermination protein NusG.